The sequence spans 172 residues: Crossover junction endodeoxyribonuclease RuvC (172 aa).

Residues Asp-12, Glu-71, and Asp-143 contribute to the active site. Residues Asp-12, Glu-71, and Asp-143 each coordinate Mg(2+).

This sequence belongs to the RuvC family. In terms of assembly, homodimer which binds Holliday junction (HJ) DNA. The HJ becomes 2-fold symmetrical on binding to RuvC with unstacked arms; it has a different conformation from HJ DNA in complex with RuvA. In the full resolvosome a probable DNA-RuvA(4)-RuvB(12)-RuvC(2) complex forms which resolves the HJ. Mg(2+) is required as a cofactor.

The protein localises to the cytoplasm. The catalysed reaction is Endonucleolytic cleavage at a junction such as a reciprocal single-stranded crossover between two homologous DNA duplexes (Holliday junction).. The RuvA-RuvB-RuvC complex processes Holliday junction (HJ) DNA during genetic recombination and DNA repair. Endonuclease that resolves HJ intermediates. Cleaves cruciform DNA by making single-stranded nicks across the HJ at symmetrical positions within the homologous arms, yielding a 5'-phosphate and a 3'-hydroxyl group; requires a central core of homology in the junction. The consensus cleavage sequence is 5'-(A/T)TT(C/G)-3'. Cleavage occurs on the 3'-side of the TT dinucleotide at the point of strand exchange. HJ branch migration catalyzed by RuvA-RuvB allows RuvC to scan DNA until it finds its consensus sequence, where it cleaves and resolves the cruciform DNA. The protein is Crossover junction endodeoxyribonuclease RuvC of Coxiella burnetii (strain CbuK_Q154) (Coxiella burnetii (strain Q154)).